Here is a 529-residue protein sequence, read N- to C-terminus: Bifunctional purine biosynthesis protein PurH (529 aa).

Residues 1 to 148 enclose the MGS-like domain; it reads MQQRRPVRRA…KNHKDVAIVV (148 aa).

It belongs to the PurH family.

The catalysed reaction is (6R)-10-formyltetrahydrofolate + 5-amino-1-(5-phospho-beta-D-ribosyl)imidazole-4-carboxamide = 5-formamido-1-(5-phospho-D-ribosyl)imidazole-4-carboxamide + (6S)-5,6,7,8-tetrahydrofolate. It catalyses the reaction IMP + H2O = 5-formamido-1-(5-phospho-D-ribosyl)imidazole-4-carboxamide. It functions in the pathway purine metabolism; IMP biosynthesis via de novo pathway; 5-formamido-1-(5-phospho-D-ribosyl)imidazole-4-carboxamide from 5-amino-1-(5-phospho-D-ribosyl)imidazole-4-carboxamide (10-formyl THF route): step 1/1. Its pathway is purine metabolism; IMP biosynthesis via de novo pathway; IMP from 5-formamido-1-(5-phospho-D-ribosyl)imidazole-4-carboxamide: step 1/1. This is Bifunctional purine biosynthesis protein PurH from Salmonella enteritidis PT4 (strain P125109).